We begin with the raw amino-acid sequence, 416 residues long: Creatine kinase U-type, mitochondrial (416 aa).

Residues methionine 1–alanine 39 constitute a mitochondrion transit peptide. A cardiolipin-binding region spans residues alanine 40 to alanine 64. In terms of domain architecture, Phosphagen kinase N-terminal spans arginine 45–asparagine 131. Serine 151 is modified (phosphoserine). A Phosphagen kinase C-terminal domain is found at tyrosine 158–leucine 400. ATP is bound at residue serine 161–arginine 165. At serine 196 the chain carries Phosphoserine. Threonine 213 is subject to Phosphothreonine. ATP is bound at residue histidine 224. Residue serine 232 is modified to Phosphoserine. ATP is bound by residues arginine 269, arginine 325, and arginine 353 to valine 358. Position 355 is a phosphothreonine (threonine 355). Serine 365 carries the post-translational modification Phosphoserine. An ATP-binding site is contributed by aspartate 368.

Belongs to the ATP:guanido phosphotransferase family. As to quaternary structure, exists as an octamer composed of four MTCK homodimers.

The protein resides in the mitochondrion inner membrane. The catalysed reaction is creatine + ATP = N-phosphocreatine + ADP + H(+). Functionally, reversibly catalyzes the transfer of phosphate between ATP and various phosphogens (e.g. creatine phosphate). Creatine kinase isoenzymes play a central role in energy transduction in tissues with large, fluctuating energy demands, such as skeletal muscle, heart, brain and spermatozoa. This Bos taurus (Bovine) protein is Creatine kinase U-type, mitochondrial (CKMT1).